A 181-amino-acid chain; its full sequence is Protein GrpE (181 aa).

Residues 1-10 are compositionally biased toward polar residues; it reads MENTQENPAT. The tract at residues 1–33 is disordered; it reads MENTQENPATPSAEDIGSEKQAAQGAAPAAEAA. Residues 21 to 33 show a composition bias toward low complexity; sequence QAAQGAAPAAEAA.

It belongs to the GrpE family. In terms of assembly, homodimer.

The protein resides in the cytoplasm. Participates actively in the response to hyperosmotic and heat shock by preventing the aggregation of stress-denatured proteins, in association with DnaK and GrpE. It is the nucleotide exchange factor for DnaK and may function as a thermosensor. Unfolded proteins bind initially to DnaJ; upon interaction with the DnaJ-bound protein, DnaK hydrolyzes its bound ATP, resulting in the formation of a stable complex. GrpE releases ADP from DnaK; ATP binding to DnaK triggers the release of the substrate protein, thus completing the reaction cycle. Several rounds of ATP-dependent interactions between DnaJ, DnaK and GrpE are required for fully efficient folding. The polypeptide is Protein GrpE (Burkholderia cenocepacia (strain ATCC BAA-245 / DSM 16553 / LMG 16656 / NCTC 13227 / J2315 / CF5610) (Burkholderia cepacia (strain J2315))).